The following is a 931-amino-acid chain: MTSAVWAVVSEQEAGGPDKDQPLRDDIRLLGRILGDTVREQEGDAIYELVETIRQTSIRFHRDADEAARQELNALLESMTPEVAVQIIRAFSYFSHLANIAEDQHHSRRNRAHAVAGSAPRPGTLANALARAEKAGIGAAELRAFFDAALVSPVLTAHPTEVRRKSTMNREMEIADLLDLKERLQATPQEAREQDEKLRRAVLTLWQTALLRKFKLTVLDEVQNGLSYYDYTFLAEVPRLLCALEDHLAEQEGGEPGAELPPFLRIGSWIGGDRDGNPFVTADVLRETVRQHRDRVMAFYLEQVGLLVTELSLAKRLVAVSEDLTALAERSGDRAPEHREEPYRLALVGIHNRLKATVAAQKAADDGKTMGAAEDGHLPYPDAAAFRADLDILYRSLMANGSAILARGRLRHVRRAVDSFGFHLASLDLRQNSDVHERTVADLLEQAAPGTNYHALDEEARIAVLRAELTNPRPLASPFLSYTEETRSELAILRTAAEAHARLGKTVIPNAIISKAEGISDMLELALLLKEVGLVSATGESAINVIPLFETIGDLQACGPVMDRLLALPEYRALVDSRGGEQEVMLGYSDSNKDGGFVSSGWELYKAEIALIEVFARHKVKLRLFHGRGGSVGRGGGPSYDAILAQPAGAVSGQIRITEQGEIISSKYSNPENGRRNLEILVSATLESTLLEAEQASPRPEFLAAMEELSKTAFTAYRSLVYETPGFEDYFWSSTVISEIATLNIGSRPASRNKTRAIEALRAIPWVFSWSQCRLMLPGWYGFGTAIAAFVEARPVDGIAFLQSMYREWPFFRTLLSNMDMVLSKSSLAVASRYAELVPDEELRTRIFSRISAEYQSAITSLLAIMGQKKLLEANPLLDRSIRNRFPYLDPLNHIQVELLKLHRSDAGSDHVLHGIQLTINGISAGLRNSG.

Active-site residues include His158 and Lys593.

This sequence belongs to the PEPCase type 1 family. It depends on Mg(2+) as a cofactor.

It catalyses the reaction oxaloacetate + phosphate = phosphoenolpyruvate + hydrogencarbonate. Its function is as follows. Forms oxaloacetate, a four-carbon dicarboxylic acid source for the tricarboxylic acid cycle. The polypeptide is Phosphoenolpyruvate carboxylase (Azorhizobium caulinodans (strain ATCC 43989 / DSM 5975 / JCM 20966 / LMG 6465 / NBRC 14845 / NCIMB 13405 / ORS 571)).